The chain runs to 156 residues: ATP synthase subunit b (156 aa).

A helical membrane pass occupies residues 7 to 29; sequence LIGQMGTFLVFWWFVNKVIWPMF.

The protein belongs to the ATPase B chain family. In terms of assembly, F-type ATPases have 2 components, F(1) - the catalytic core - and F(0) - the membrane proton channel. F(1) has five subunits: alpha(3), beta(3), gamma(1), delta(1), epsilon(1). F(0) has three main subunits: a(1), b(2) and c(10-14). The alpha and beta chains form an alternating ring which encloses part of the gamma chain. F(1) is attached to F(0) by a central stalk formed by the gamma and epsilon chains, while a peripheral stalk is formed by the delta and b chains.

The protein localises to the cell inner membrane. F(1)F(0) ATP synthase produces ATP from ADP in the presence of a proton or sodium gradient. F-type ATPases consist of two structural domains, F(1) containing the extramembraneous catalytic core and F(0) containing the membrane proton channel, linked together by a central stalk and a peripheral stalk. During catalysis, ATP synthesis in the catalytic domain of F(1) is coupled via a rotary mechanism of the central stalk subunits to proton translocation. Its function is as follows. Component of the F(0) channel, it forms part of the peripheral stalk, linking F(1) to F(0). The chain is ATP synthase subunit b from Dichelobacter nodosus (strain VCS1703A).